Consider the following 85-residue polypeptide: Makatoxin-3 (85 aa).

The signal sequence occupies residues 1–19; that stretch reads MNYLIVISFALLLMTGVES. The LCN-type CS-alpha/beta domain occupies 21 to 83; it reads RDAYIAKKEN…VPIRIPGPCI (63 aa). 4 disulfide bridges follow: cysteine 31/cysteine 82, cysteine 35/cysteine 55, cysteine 41/cysteine 65, and cysteine 45/cysteine 67.

Belongs to the long (4 C-C) scorpion toxin superfamily. Sodium channel inhibitor family. Alpha subfamily. As to expression, expressed by the venom gland.

It localises to the secreted. Its function is as follows. This protein markedly relaxes the rat carbachol-precontracted anococcygeus muscle. This relaxation is inhibited by the inhibitor of nitric oxide (NO) synthase, N-nitro-L-arginine methyl ester (L-NAME), suggesting that the response induced by this protein is NO-mediated. This is Makatoxin-3 from Olivierus martensii (Manchurian scorpion).